Here is a 62-residue protein sequence, read N- to C-terminus: Sperm protamine P1 (62 aa).

Residues 1 to 62 (MARYRHSRSR…RYSRRRRRRY (62 aa)) are disordered.

It belongs to the protamine P1 family. As to expression, testis.

It is found in the nucleus. Its subcellular location is the chromosome. Functionally, protamines substitute for histones in the chromatin of sperm during the haploid phase of spermatogenesis. They compact sperm DNA into a highly condensed, stable and inactive complex. This chain is Sperm protamine P1 (PRM1), found in Thylogale stigmatica (Red-legged pademelon).